Here is a 252-residue protein sequence, read N- to C-terminus: 5-oxoprolinase subunit A (252 aa).

The protein belongs to the LamB/PxpA family. As to quaternary structure, forms a complex composed of PxpA, PxpB and PxpC.

It carries out the reaction 5-oxo-L-proline + ATP + 2 H2O = L-glutamate + ADP + phosphate + H(+). Catalyzes the cleavage of 5-oxoproline to form L-glutamate coupled to the hydrolysis of ATP to ADP and inorganic phosphate. This is 5-oxoprolinase subunit A from Photorhabdus laumondii subsp. laumondii (strain DSM 15139 / CIP 105565 / TT01) (Photorhabdus luminescens subsp. laumondii).